We begin with the raw amino-acid sequence, 144 residues long: Prefoldin subunit alpha (144 aa).

It belongs to the prefoldin alpha subunit family. Heterohexamer of two alpha and four beta subunits.

The protein resides in the cytoplasm. In terms of biological role, molecular chaperone capable of stabilizing a range of proteins. Seems to fulfill an ATP-independent, HSP70-like function in archaeal de novo protein folding. The chain is Prefoldin subunit alpha from Methanococcus aeolicus (strain ATCC BAA-1280 / DSM 17508 / OCM 812 / Nankai-3).